Reading from the N-terminus, the 344-residue chain is tRNA(Ile)-lysidine synthase (344 aa).

35-40 (SGGPDS) is a binding site for ATP.

The protein belongs to the tRNA(Ile)-lysidine synthase family.

It localises to the cytoplasm. The enzyme catalyses cytidine(34) in tRNA(Ile2) + L-lysine + ATP = lysidine(34) in tRNA(Ile2) + AMP + diphosphate + H(+). Functionally, ligates lysine onto the cytidine present at position 34 of the AUA codon-specific tRNA(Ile) that contains the anticodon CAU, in an ATP-dependent manner. Cytidine is converted to lysidine, thus changing the amino acid specificity of the tRNA from methionine to isoleucine. In Methylobacterium sp. (strain 4-46), this protein is tRNA(Ile)-lysidine synthase.